A 305-amino-acid chain; its full sequence is Acetaldehyde dehydrogenase 5 (305 aa).

Serine 11–isoleucine 14 serves as a coordination point for NAD(+). Cysteine 130 acts as the Acyl-thioester intermediate in catalysis. NAD(+)-binding positions include serine 161–asparagine 169 and asparagine 272.

It belongs to the acetaldehyde dehydrogenase family.

It carries out the reaction acetaldehyde + NAD(+) + CoA = acetyl-CoA + NADH + H(+). This Dechloromonas aromatica (strain RCB) protein is Acetaldehyde dehydrogenase 5.